We begin with the raw amino-acid sequence, 185 residues long: Elongation factor P (185 aa).

Belongs to the elongation factor P family.

The protein resides in the cytoplasm. Its pathway is protein biosynthesis; polypeptide chain elongation. In terms of biological role, involved in peptide bond synthesis. Stimulates efficient translation and peptide-bond synthesis on native or reconstituted 70S ribosomes in vitro. Probably functions indirectly by altering the affinity of the ribosome for aminoacyl-tRNA, thus increasing their reactivity as acceptors for peptidyl transferase. This Burkholderia ambifaria (strain MC40-6) protein is Elongation factor P.